Here is a 95-residue protein sequence, read N- to C-terminus: Co-chaperonin GroES (95 aa).

This sequence belongs to the GroES chaperonin family. Heptamer of 7 subunits arranged in a ring. Interacts with the chaperonin GroEL.

The protein resides in the cytoplasm. Functionally, together with the chaperonin GroEL, plays an essential role in assisting protein folding. The GroEL-GroES system forms a nano-cage that allows encapsulation of the non-native substrate proteins and provides a physical environment optimized to promote and accelerate protein folding. GroES binds to the apical surface of the GroEL ring, thereby capping the opening of the GroEL channel. The protein is Co-chaperonin GroES of Rickettsia felis (strain ATCC VR-1525 / URRWXCal2) (Rickettsia azadi).